A 99-amino-acid chain; its full sequence is Protein Tat (99 aa).

An interaction with human CREBBP region spans residues 1–24 (MDPVDPKLEPWNHPGSQPQTACNN). The interval 1–48 (MDPVDPKLEPWNHPGSQPQTACNNCYCKKCCYHCQMCFLKKGLGISYG) is transactivation. The Zn(2+) site is built by Cys-22, Cys-25, and Cys-27. The tract at residues 22 to 37 (CNNCYCKKCCYHCQMC) is cysteine-rich. Position 28 is an N6-acetyllysine; by host PCAF (Lys-28). 4 residues coordinate Zn(2+): Cys-30, His-33, Cys-34, and Cys-37. A core region spans residues 38–48 (FLKKGLGISYG). A compositionally biased stretch (basic residues) spans 48–58 (GRKKRSQRHRT). Positions 48–99 (GRKKRSQRHRTPASLQDHQNSISKQPLSRTHGDPTGPKEQKKEVASKTETDP) are disordered. The Nuclear localization signal, RNA-binding (TAR), and protein transduction motif lies at 49–57 (RKKRSQRHR). Residues 49–86 (RKKRSQRHRTPASLQDHQNSISKQPLSRTHGDPTGPKE) form an interaction with the host capping enzyme RNGTT region. Lys-50 and Lys-51 each carry N6-acetyllysine; by host EP300 and GCN5L2. Arg-52 is modified (asymmetric dimethylarginine; by host PRMT6). Positions 60-75 (ASLQDHQNSISKQPLS) are enriched in polar residues. A Glycyl lysine isopeptide (Lys-Gly) (interchain with G-Cter in ubiquitin) cross-link involves residue Lys-71. The span at 77–99 (THGDPTGPKEQKKEVASKTETDP) shows a compositional bias: basic and acidic residues.

It belongs to the lentiviruses Tat family. As to quaternary structure, interacts with host CCNT1. Associates with the P-TEFb complex composed at least of Tat, P-TEFb (CDK9 and CCNT1), TAR RNA, RNA Pol II. Recruits the HATs CREBBP, TAF1/TFIID, EP300, PCAF and GCN5L2. Interacts with host KAT5/Tip60; this interaction targets the latter to degradation. Interacts with the host deacetylase SIRT1. Interacts with host capping enzyme RNGTT; this interaction stimulates RNGTT. Binds to host KDR, and to the host integrins ITGAV/ITGB3 and ITGA5/ITGB1. Interacts with host KPNB1/importin beta-1 without previous binding to KPNA1/importin alpha-1. Interacts with EIF2AK2. Interacts with host nucleosome assembly protein NAP1L1; this interaction may be required for the transport of Tat within the nucleus, since the two proteins interact at the nuclear rim. Interacts with host C1QBP/SF2P32; this interaction involves lysine-acetylated Tat. Interacts with the host chemokine receptors CCR2, CCR3 and CXCR4. Interacts with host DPP4/CD26; this interaction may trigger an anti-proliferative effect. Interacts with host LDLR. Interacts with the host extracellular matrix metalloproteinase MMP1. Interacts with host PRMT6; this interaction mediates Tat's methylation. Interacts with, and is ubiquitinated by MDM2/Hdm2. Interacts with host PSMC3 and HTATIP2. Interacts with STAB1; this interaction may overcome SATB1-mediated repression of IL2 and IL2RA (interleukin) in T cells by binding to the same domain than HDAC1. Interacts (when acetylated) with human CDK13, thereby increasing HIV-1 mRNA splicing and promoting the production of the doubly spliced HIV-1 protein Nef. Interacts with host TBP; this interaction modulates the activity of transcriptional pre-initiation complex. Interacts with host RELA. Interacts with host PLSCR1; this interaction negatively regulates Tat transactivation activity by altering its subcellular distribution. Post-translationally, asymmetrical arginine methylation by host PRMT6 seems to diminish the transactivation capacity of Tat and affects the interaction with host CCNT1. Acetylation by EP300, CREBBP, GCN5L2/GCN5 and PCAF regulates the transactivation activity of Tat. EP300-mediated acetylation of Lys-50 promotes dissociation of Tat from the TAR RNA through the competitive binding to PCAF's bromodomain. In addition, the non-acetylated Tat's N-terminus can also interact with PCAF. PCAF-mediated acetylation of Lys-28 enhances Tat's binding to CCNT1. Lys-50 is deacetylated by SIRT1. In terms of processing, polyubiquitination by host MDM2 does not target Tat to degradation, but activates its transactivation function and fosters interaction with CCNT1 and TAR RNA. Post-translationally, phosphorylated by EIF2AK2 on serine and threonine residues adjacent to the basic region important for TAR RNA binding and function. Phosphorylation of Tat by EIF2AK2 is dependent on the prior activation of EIF2AK2 by dsRNA.

It is found in the host nucleus. The protein resides in the host nucleolus. It localises to the host cytoplasm. Its subcellular location is the secreted. Functionally, transcriptional activator that increases RNA Pol II processivity, thereby increasing the level of full-length viral transcripts. Recognizes a hairpin structure at the 5'-LTR of the nascent viral mRNAs referred to as the transactivation responsive RNA element (TAR) and recruits the cyclin T1-CDK9 complex (P-TEFb complex) that will in turn hyperphosphorylate the RNA polymerase II to allow efficient elongation. The CDK9 component of P-TEFb and other Tat-activated kinases hyperphosphorylate the C-terminus of RNA Pol II that becomes stabilized and much more processive. Other factors such as HTATSF1/Tat-SF1, SUPT5H/SPT5, and HTATIP2 are also important for Tat's function. Besides its effect on RNA Pol II processivity, Tat induces chromatin remodeling of proviral genes by recruiting the histone acetyltransferases (HATs) CREBBP, EP300 and PCAF to the chromatin. This also contributes to the increase in proviral transcription rate, especially when the provirus integrates in transcriptionally silent region of the host genome. To ensure maximal activation of the LTR, Tat mediates nuclear translocation of NF-kappa-B by interacting with host RELA. Through its interaction with host TBP, Tat may also modulate transcription initiation. Tat can reactivate a latently infected cell by penetrating in it and transactivating its LTR promoter. In the cytoplasm, Tat is thought to act as a translational activator of HIV-1 mRNAs. In terms of biological role, extracellular circulating Tat can be endocytosed by surrounding uninfected cells via the binding to several surface receptors such as CD26, CXCR4, heparan sulfate proteoglycans (HSPG) or LDLR. Neurons are rarely infected, but they internalize Tat via their LDLR. Through its interaction with nuclear HATs, Tat is potentially able to control the acetylation-dependent cellular gene expression. Modulates the expression of many cellular genes involved in cell survival, proliferation or in coding for cytokines or cytokine receptors. Tat plays a role in T-cell and neurons apoptosis. Tat induced neurotoxicity and apoptosis probably contribute to neuroAIDS. Circulating Tat also acts as a chemokine-like and/or growth factor-like molecule that binds to specific receptors on the surface of the cells, affecting many cellular pathways. In the vascular system, Tat binds to ITGAV/ITGB3 and ITGA5/ITGB1 integrins dimers at the surface of endothelial cells and competes with bFGF for heparin-binding sites, leading to an excess of soluble bFGF. This chain is Protein Tat, found in Homo sapiens (Human).